The following is a 131-amino-acid chain: Small ribosomal subunit protein uS8 (131 aa).

It belongs to the universal ribosomal protein uS8 family. Part of the 30S ribosomal subunit. Contacts proteins S5 and S12.

Its function is as follows. One of the primary rRNA binding proteins, it binds directly to 16S rRNA central domain where it helps coordinate assembly of the platform of the 30S subunit. This chain is Small ribosomal subunit protein uS8, found in Legionella pneumophila (strain Paris).